Consider the following 1270-residue polypeptide: Glycine betaine reductase ATRR (1270 aa).

An adenylation (A) domain region spans residues 14-418; that stretch reads FTQQVRASPN…MIKLRGYSVV (405 aa). The Carrier domain maps to 528–605; sequence KEDPIGIEDI…GHLDTVRAIR (78 aa). Serine 565 is modified (O-(pantetheine 4'-phosphoryl)serine). The carboxylic acid reductase domain R1 stretch occupies residues 643–937; it reads KTVLLTGVTG…EPLSWDDWVA (295 aa). The tract at residues 1026-1256 is aldehyde reductase domain R2; sequence PLSGKVAVVT…IYALRQPEHV (231 aa).

Belongs to the NRP synthetase family.

Its activity is regulated as follows. The tetramethylammonium ion, which mimics the head group of glycine betaine, acts as a competitive inhibitor of ATRR A domain, whereas the potency decreased by three orders of magnitude with dimethylammonium. Choline is a mixed inhibitor for both glycine betaine reductase and aldehyde reductase activity but more potent in competition against glycine betaine in the first reduction step. Therefore, choline could act as a feedback inhibitor to regulate ATRR enzymatic activity. The lowered binding affinity of choline to R2 favors the release of choline after glycine betaine aldehyde reduction to avoid direct product inhibition. Its function is as follows. NRPS-like enzyme with an unusual domain architecture that converts back glycine betaine to choline via a 2-step reduction mechanism, and thereby can be an alternative source of choline. Permits direct reutilization of endogenously stored glycine betaine for on-demand biosynthesis of choline and choline derivatives, including phospholipid phosphatidylcholine (PC) which has an essential role in maintaining membrane integrity and functionality, or choline-O-sulfate, a mean for intracellular sulfate storage. Glycine betaine is activated by the adenylation (A) domain, and transferred to the thiolation (T) domain. Movement of the phosphopantetheine arm to the thioester reductase domain R1 then allows thioester reduction by NADPH of glycine betainoyl thioester to glycine betaine aldehyde, which is in turn reduced to choline by the aldehyde reductase domain R2. In Emericella nidulans (strain FGSC A4 / ATCC 38163 / CBS 112.46 / NRRL 194 / M139) (Aspergillus nidulans), this protein is Glycine betaine reductase ATRR.